The chain runs to 323 residues: Phosphoribosylaminoimidazole-succinocarboxamide synthase (323 aa).

Belongs to the SAICAR synthetase family.

The enzyme catalyses 5-amino-1-(5-phospho-D-ribosyl)imidazole-4-carboxylate + L-aspartate + ATP = (2S)-2-[5-amino-1-(5-phospho-beta-D-ribosyl)imidazole-4-carboxamido]succinate + ADP + phosphate + 2 H(+). The protein operates within purine metabolism; IMP biosynthesis via de novo pathway; 5-amino-1-(5-phospho-D-ribosyl)imidazole-4-carboxamide from 5-amino-1-(5-phospho-D-ribosyl)imidazole-4-carboxylate: step 1/2. This is Phosphoribosylaminoimidazole-succinocarboxamide synthase from Azobacteroides pseudotrichonymphae genomovar. CFP2.